We begin with the raw amino-acid sequence, 279 residues long: Probable endonuclease 4 (279 aa).

Zn(2+) is bound by residues His-69, His-109, Glu-145, Asp-179, His-182, His-216, Asp-229, His-231, and Glu-261.

It belongs to the AP endonuclease 2 family. Requires Zn(2+) as cofactor.

The enzyme catalyses Endonucleolytic cleavage to 5'-phosphooligonucleotide end-products.. Endonuclease IV plays a role in DNA repair. It cleaves phosphodiester bonds at apurinic or apyrimidinic (AP) sites, generating a 3'-hydroxyl group and a 5'-terminal sugar phosphate. This Chlorobium phaeovibrioides (strain DSM 265 / 1930) (Prosthecochloris vibrioformis (strain DSM 265)) protein is Probable endonuclease 4.